Here is a 515-residue protein sequence, read N- to C-terminus: 2-isopropylmalate synthase (515 aa).

Residues 5–268 (VIIFDTTLRD…VCGIDASQIV (264 aa)) form the Pyruvate carboxyltransferase domain. 4 residues coordinate Mn(2+): D14, H202, H204, and N239. Positions 394 to 515 (HFISLSQHSE…QAKLNAQMAP (122 aa)) are regulatory domain.

Belongs to the alpha-IPM synthase/homocitrate synthase family. LeuA type 1 subfamily. In terms of assembly, homodimer. The cofactor is Mn(2+).

The protein localises to the cytoplasm. The enzyme catalyses 3-methyl-2-oxobutanoate + acetyl-CoA + H2O = (2S)-2-isopropylmalate + CoA + H(+). It participates in amino-acid biosynthesis; L-leucine biosynthesis; L-leucine from 3-methyl-2-oxobutanoate: step 1/4. Its function is as follows. Catalyzes the condensation of the acetyl group of acetyl-CoA with 3-methyl-2-oxobutanoate (2-ketoisovalerate) to form 3-carboxy-3-hydroxy-4-methylpentanoate (2-isopropylmalate). In Polynucleobacter asymbioticus (strain DSM 18221 / CIP 109841 / QLW-P1DMWA-1) (Polynucleobacter necessarius subsp. asymbioticus), this protein is 2-isopropylmalate synthase.